We begin with the raw amino-acid sequence, 140 residues long: Fluoride-specific ion channel FluC 1 (140 aa).

The next 4 membrane-spanning stretches (helical) occupy residues 4–24 (LYLA…ASFI), 32–52 (FPLA…FILT), 70–90 (TGML…LHLL), and 99–119 (LLYL…GIFL). Gly-74 and Thr-77 together coordinate Na(+).

Belongs to the fluoride channel Fluc/FEX (TC 1.A.43) family.

It is found in the cell membrane. The enzyme catalyses fluoride(in) = fluoride(out). Na(+) is not transported, but it plays an essential structural role and its presence is essential for fluoride channel function. Functionally, fluoride-specific ion channel. Important for reducing fluoride concentration in the cell, thus reducing its toxicity. The chain is Fluoride-specific ion channel FluC 1 from Moorella thermoacetica (strain ATCC 39073 / JCM 9320).